The chain runs to 261 residues: 5'-nucleotidase SurE (261 aa).

4 residues coordinate a divalent metal cation: Asp18, Asp19, Ser50, and Asn102.

This sequence belongs to the SurE nucleotidase family. A divalent metal cation is required as a cofactor.

The protein resides in the cytoplasm. The catalysed reaction is a ribonucleoside 5'-phosphate + H2O = a ribonucleoside + phosphate. Its function is as follows. Nucleotidase that shows phosphatase activity on nucleoside 5'-monophosphates. The chain is 5'-nucleotidase SurE from Rhodospirillum rubrum (strain ATCC 11170 / ATH 1.1.1 / DSM 467 / LMG 4362 / NCIMB 8255 / S1).